A 571-amino-acid chain; its full sequence is uncharacterized protein (571 aa).

Residues 1–25 are disordered; it reads MAPSVATSLKAEILPSPRTSSPSSN. One can recognise an FAD-binding FR-type domain in the interval 135–389; the sequence is FSVFPAPILD…RGLHKNAFAT (255 aa). The segment at 447 to 479 is disordered; that stretch reads NPLQKSSDDDASSTVSQQTETEMDSFEVKKDGT.

This sequence belongs to the flavoprotein pyridine nucleotide cytochrome reductase family. Requires FAD as cofactor.

This is an uncharacterized protein from Schizosaccharomyces pombe (strain 972 / ATCC 24843) (Fission yeast).